The chain runs to 89 residues: Cell division topological specificity factor (89 aa).

This sequence belongs to the MinE family.

Prevents the cell division inhibition by proteins MinC and MinD at internal division sites while permitting inhibition at polar sites. This ensures cell division at the proper site by restricting the formation of a division septum at the midpoint of the long axis of the cell. This Brucella anthropi (strain ATCC 49188 / DSM 6882 / CCUG 24695 / JCM 21032 / LMG 3331 / NBRC 15819 / NCTC 12168 / Alc 37) (Ochrobactrum anthropi) protein is Cell division topological specificity factor.